A 110-amino-acid chain; its full sequence is Nodulation protein NolE (110 aa).

The N-terminal stretch at 1–25 (MKVTGYYVIVAALLALALRAGPSLA) is a signal peptide. The segment at 27 to 64 (DDRNQDCGPATSDPRANLNGADKAHSAEHTQDFNCQDT) is disordered. A compositionally biased stretch (basic and acidic residues) spans 48–57 (DKAHSAEHTQ).

The protein resides in the periplasm. The chain is Nodulation protein NolE (nolE) from Rhizobium leguminosarum bv. phaseoli.